The chain runs to 449 residues: Nucleoporin NUP42 (449 aa).

Residues 1–25 form a C3H1-type zinc finger; it reads MAICSFFLQGRCRYGEKCWNEHPRG. Disordered regions lie at residues 22 to 84 and 218 to 237; these read HPRG…GFDN and DMTSGYNGQQKPAFGSSSFP. Polar residues-rich tracts occupy residues 47–83 and 218–227; these read WGSSSQRYVQPSSFSRSTTWVNRDNEKPSSGSHSGFD and DMTSGYNGQQ. 7 FG repeats span residues 231 to 232, 274 to 275, 284 to 285, 305 to 306, 314 to 315, 335 to 336, and 347 to 348; these read FG.

As to quaternary structure, probable component of the nuclear pore complex (NPC).

It is found in the nucleus. The protein resides in the nuclear pore complex. Its subcellular location is the nucleus membrane. Its function is as follows. Required for the export of mRNAs containing poly(A) tails from the nucleus into the cytoplasm. The chain is Nucleoporin NUP42 (nup42) from Xenopus tropicalis (Western clawed frog).